Reading from the N-terminus, the 233-residue chain is 5'-methylthioadenosine/S-adenosylhomocysteine nucleosidase (233 aa).

Glu-12 acts as the Proton acceptor in catalysis. Substrate contacts are provided by residues Gly-78, Ile-156, and 177-178 (ME). The Proton donor role is filled by Asp-201.

Belongs to the PNP/UDP phosphorylase family. MtnN subfamily.

It carries out the reaction S-adenosyl-L-homocysteine + H2O = S-(5-deoxy-D-ribos-5-yl)-L-homocysteine + adenine. The catalysed reaction is S-methyl-5'-thioadenosine + H2O = 5-(methylsulfanyl)-D-ribose + adenine. The enzyme catalyses 5'-deoxyadenosine + H2O = 5-deoxy-D-ribose + adenine. The protein operates within amino-acid biosynthesis; L-methionine biosynthesis via salvage pathway; S-methyl-5-thio-alpha-D-ribose 1-phosphate from S-methyl-5'-thioadenosine (hydrolase route): step 1/2. Catalyzes the irreversible cleavage of the glycosidic bond in both 5'-methylthioadenosine (MTA) and S-adenosylhomocysteine (SAH/AdoHcy) to adenine and the corresponding thioribose, 5'-methylthioribose and S-ribosylhomocysteine, respectively. Also cleaves 5'-deoxyadenosine, a toxic by-product of radical S-adenosylmethionine (SAM) enzymes, into 5-deoxyribose and adenine. This chain is 5'-methylthioadenosine/S-adenosylhomocysteine nucleosidase, found in Listeria innocua serovar 6a (strain ATCC BAA-680 / CLIP 11262).